The following is a 209-amino-acid chain: uncharacterized protein (209 aa).

This is an uncharacterized protein from Escherichia coli (strain K12).